We begin with the raw amino-acid sequence, 404 residues long: MKLPIYLDYSATTPVDPRVAEKMMQFLTLDGTFGNPASRSHRFGWQAEEAVDIARNQIAELVGADPREIVFTSGATESDNLAIKGAANFYQKKGKHIITSKTEHKAVLDTCRQLEREGFEVTYLAPQSNGIISLQALEAAMREDTILVSIMHVNNEIGVVQDIEAIGEMCRARGIIYHVDATQSVGKLPIDLSKLKVDLMSFSGHKIYGPKGIGALYVRRKPRIRIEAQIHGGGHERGMRSGTLPVHQIAGMGEAYRIAKEEMASEMARLRTLRDRLWNGVKDMEEVYLNGSLENGVPNILNVSFNYVEGESLIMALKDLAVSSGSACTSASLEPSYVLRALGMTDELAHSSIRFSLGRFTTEEEIDYTIQLVRKSIGRLRDLSPLWDMFKQGVDINSIEWAHH.

Pyridoxal 5'-phosphate-binding positions include 75 to 76 (AT), N155, Q183, and 203 to 205 (SGH). K206 bears the N6-(pyridoxal phosphate)lysine mark. Position 243 (T243) interacts with pyridoxal 5'-phosphate. The active-site Cysteine persulfide intermediate is the C328. Residue C328 coordinates [2Fe-2S] cluster.

The protein belongs to the class-V pyridoxal-phosphate-dependent aminotransferase family. NifS/IscS subfamily. In terms of assembly, homodimer. Forms a heterotetramer with IscU, interacts with other sulfur acceptors. Requires pyridoxal 5'-phosphate as cofactor.

The protein localises to the cytoplasm. It catalyses the reaction (sulfur carrier)-H + L-cysteine = (sulfur carrier)-SH + L-alanine. It participates in cofactor biosynthesis; iron-sulfur cluster biosynthesis. Its function is as follows. Master enzyme that delivers sulfur to a number of partners involved in Fe-S cluster assembly, tRNA modification or cofactor biosynthesis. Catalyzes the removal of elemental sulfur atoms from cysteine to produce alanine. Functions as a sulfur delivery protein for Fe-S cluster synthesis onto IscU, an Fe-S scaffold assembly protein, as well as other S acceptor proteins. In Serratia proteamaculans (strain 568), this protein is Cysteine desulfurase IscS.